Reading from the N-terminus, the 512-residue chain is Cytochrome P450 monooxygenase FrzL (512 aa).

The chain crosses the membrane as a helical span at residues 6–26; sequence TMLAFVPYLAVFVACYGLVYY. C423 is a heme binding site.

This sequence belongs to the cytochrome P450 family. It depends on heme as a cofactor.

The protein resides in the membrane. In terms of biological role, cytochrome P450 monooxygenase; part of the gene cluster that mediates the biosynthesis of the alkaloid (-)-FR901483, a potent immunosuppressant that shows efficacy in animal models and a probable inhibitor of purine nucleotide biosynthesis by targeting phosphoribosylpyrophosphate amidotransferase (PPAT). The only unassigned enzyme in the cluster is the second cytochrome P450 monooxygenase FrzL. The biosynthesis of (-)-FR901483 starts with the condensation of two L-tyrosines to yield (S,S)-dityrosyl-piperazine. This process occurs in 3 steps with the non-canonical nonribosomal peptide synthetase FrzA catalyzing the reduction of L-tyrosine into L-tyrosinal, the spontaneous condensation of 2 L-tyrosinal units, and the subsequent reduction by the NmrA-like family domain-containing oxidoreductase FrzB. The cytochrome P450 monooxygenase FrzC then performs coupling between N10 and C1' to morph the piperazine into a 1,4-diazabicyclo[3.2.1]octane spiro-fused to a 2,5-cyclohexadienone. The dienone portion is further reduced to cyclohexanone by the flavin-dependent reductase FrzD. The methyltranserases (MTs) FrzE and FrzF are then involved in the methylation at the C10' amine and the C4 phenolic oxygen, respectively. The order of the two MTs appear to be interchangeable. Cleavage of the C9-N10' bond by the dioxygenase FrzG then leads to formation of a conjugated iminium. In addition to the oxidation of C9, an additional dehydrogenation between C7 and C8 can occur to give a likely shunt product. The next biosynthetic step is the intramolecular aldol condensation catalyzed by the newly identified aldolase FrzH to yield an aza-tricyclic product with the formation of a C9-C3' bond. The short-chain dehydrogenase/reductase FrzI then produces dephospho-(-)-FR901483 that is phosphorylated at C4'-OH into (-)-FR901483 by the phosphotransferase FrzJ. The sequence is that of Cytochrome P450 monooxygenase FrzL from Cladobotryum sp.